The chain runs to 417 residues: uncharacterized protein (417 aa).

It to M.tuberculosis Rv2067c.

This is an uncharacterized protein from Synechococcus sp. (strain ATCC 27144 / PCC 6301 / SAUG 1402/1) (Anacystis nidulans).